A 1408-amino-acid polypeptide reads, in one-letter code: ARF guanine-nucleotide exchange factor 1 (1408 aa).

S49 bears the Phosphoserine mark. Positions 262–287 (TTTSDNDLSSTDDDSAVADDNKNEKP) are disordered. Residues 552 to 706 (FNEKAKKGIQ…IIMLNTDSHN (155 aa)) enclose the SEC7 domain.

Interacts (via N-terminal region) with SEC21 (via C-terminus). Interacts with GMH1. Interacts with DRS2.

Its subcellular location is the cytoplasm. The protein localises to the cytosol. The protein resides in the membrane. It localises to the endoplasmic reticulum. It is found in the mitochondrion. Functionally, activates the ARF proteins by exchanging bound GDP for free GTP. Plays a role in maintaining mitochondrial morphology, and in the turnover of mitochondria through mitophagy. This chain is ARF guanine-nucleotide exchange factor 1 (GEA1), found in Saccharomyces cerevisiae (strain ATCC 204508 / S288c) (Baker's yeast).